We begin with the raw amino-acid sequence, 231 residues long: Axial regulator YABBY 4 (231 aa).

Residues 26-53 form a C4-type zinc finger; sequence CGFCTTILLVSVPFTSLSMVVTVRCGHC. Disordered stretches follow at residues 98 to 120 and 211 to 231; these read KVNQEKENSPTTLVSSSDNEDED and NNGFRERKAQRHSIWGKSPFE.

This sequence belongs to the YABBY family. Interacts with SPL/NZZ.

It localises to the nucleus. Essential for the formation and the abaxial-adaxial asymmetric growth of the ovule outer integument. This chain is Axial regulator YABBY 4 (YAB4), found in Arabidopsis thaliana (Mouse-ear cress).